A 267-amino-acid chain; its full sequence is Acetyl-coenzyme A carboxylase carboxyl transferase subunit beta 1 (267 aa).

Residues 9–267 enclose the CoA carboxyltransferase N-terminal domain; sequence TWQACPKCGR…NYGIGRSAHG (259 aa). 4 residues coordinate Zn(2+): cysteine 13, cysteine 16, cysteine 31, and cysteine 34. The C4-type zinc finger occupies 13–34; that stretch reads CPKCGRHVHQRQWGTYQQCPYC.

The protein belongs to the AccD/PCCB family. As to quaternary structure, acetyl-CoA carboxylase is a heterohexamer composed of biotin carboxyl carrier protein (AccB), biotin carboxylase (AccC) and two subunits each of ACCase subunit alpha (AccA) and ACCase subunit beta (AccD). Zn(2+) serves as cofactor.

The protein localises to the cytoplasm. It catalyses the reaction N(6)-carboxybiotinyl-L-lysyl-[protein] + acetyl-CoA = N(6)-biotinyl-L-lysyl-[protein] + malonyl-CoA. Its pathway is lipid metabolism; malonyl-CoA biosynthesis; malonyl-CoA from acetyl-CoA: step 1/1. In terms of biological role, component of the acetyl coenzyme A carboxylase (ACC) complex. Biotin carboxylase (BC) catalyzes the carboxylation of biotin on its carrier protein (BCCP) and then the CO(2) group is transferred by the transcarboxylase to acetyl-CoA to form malonyl-CoA. This is Acetyl-coenzyme A carboxylase carboxyl transferase subunit beta 1 from Lactiplantibacillus plantarum (strain JDM1) (Lactobacillus plantarum).